The chain runs to 87 residues: Putative regulatory protein CHY_1489 (87 aa).

This sequence belongs to the RemA family.

The polypeptide is Putative regulatory protein CHY_1489 (Carboxydothermus hydrogenoformans (strain ATCC BAA-161 / DSM 6008 / Z-2901)).